The chain runs to 130 residues: Sigma-w pathway protein YsdB (130 aa).

A helical transmembrane segment spans residues 2-22 (FVMVLRIILLALFAYCIYAVV).

The protein localises to the membrane. May mediate a negative feedback loop that down-regulates the expression of the sigma-W regulon following the activation of sigma-W in response to conditions of cell envelope stress. Might interact with and inhibit the activity of the protease PrsW, or could bind to the anti-sigma-W factor RsiW and thereby protect it from PrsW-mediated cleavage. The sequence is that of Sigma-w pathway protein YsdB (ysdB) from Bacillus subtilis (strain 168).